The primary structure comprises 512 residues: Maturase K (512 aa).

The protein belongs to the intron maturase 2 family. MatK subfamily.

It is found in the plastid. The protein resides in the chloroplast. Functionally, usually encoded in the trnK tRNA gene intron. Probably assists in splicing its own and other chloroplast group II introns. This chain is Maturase K, found in Alisma canaliculatum (Water plantain).